The primary structure comprises 255 residues: tRNA1(Val) (adenine(37)-N6)-methyltransferase (255 aa).

The protein belongs to the methyltransferase superfamily. tRNA (adenine-N(6)-)-methyltransferase family.

Its subcellular location is the cytoplasm. The enzyme catalyses adenosine(37) in tRNA1(Val) + S-adenosyl-L-methionine = N(6)-methyladenosine(37) in tRNA1(Val) + S-adenosyl-L-homocysteine + H(+). Functionally, specifically methylates the adenine in position 37 of tRNA(1)(Val) (anticodon cmo5UAC). The sequence is that of tRNA1(Val) (adenine(37)-N6)-methyltransferase from Porphyromonas gingivalis (strain ATCC BAA-308 / W83).